The chain runs to 217 residues: Probable transaldolase (217 aa).

Lysine 83 acts as the Schiff-base intermediate with substrate in catalysis.

It belongs to the transaldolase family. Type 3B subfamily.

The protein localises to the cytoplasm. It catalyses the reaction D-sedoheptulose 7-phosphate + D-glyceraldehyde 3-phosphate = D-erythrose 4-phosphate + beta-D-fructose 6-phosphate. It functions in the pathway carbohydrate degradation; pentose phosphate pathway; D-glyceraldehyde 3-phosphate and beta-D-fructose 6-phosphate from D-ribose 5-phosphate and D-xylulose 5-phosphate (non-oxidative stage): step 2/3. Transaldolase is important for the balance of metabolites in the pentose-phosphate pathway. The sequence is that of Probable transaldolase from Brucella abortus (strain S19).